The following is a 239-amino-acid chain: Ribulose-phosphate 3-epimerase (239 aa).

Ser-9 serves as a coordination point for substrate. His-34, Asp-36, and His-78 together coordinate a divalent metal cation. Asp-36 acts as the Proton acceptor in catalysis. Substrate contacts are provided by residues His-78, Gly-154–Gly-157, Asp-183–Gly-185, and Gly-205–Ser-207. An a divalent metal cation-binding site is contributed by Asp-183. Asp-183 serves as the catalytic Proton donor.

It belongs to the ribulose-phosphate 3-epimerase family. Co(2+) is required as a cofactor. Requires Fe(2+) as cofactor. Mn(2+) serves as cofactor. It depends on Zn(2+) as a cofactor.

It catalyses the reaction D-ribulose 5-phosphate = D-xylulose 5-phosphate. It participates in carbohydrate degradation; pentose phosphate pathway; D-xylulose 5-phosphate from D-ribulose 5-phosphate (non-oxidative stage): step 1/1. In terms of biological role, catalyzes the reversible epimerization of D-ribulose 5-phosphate to D-xylulose 5-phosphate. The sequence is that of Ribulose-phosphate 3-epimerase (RPE1) from Eremothecium gossypii (strain ATCC 10895 / CBS 109.51 / FGSC 9923 / NRRL Y-1056) (Yeast).